The chain runs to 247 residues: Small ribosomal subunit protein uS3 (247 aa).

The 70-residue stretch at 18–87 folds into the KH type-2 domain; the sequence is IDEYLAKRFY…NPQITVRRVE (70 aa). Positions 226–247 are disordered; sequence QQGEVVGEAPNTPLEEQGQKQG.

Belongs to the universal ribosomal protein uS3 family. Part of the 30S ribosomal subunit.

Its function is as follows. Binds the lower part of the 30S subunit head. In Hyperthermus butylicus (strain DSM 5456 / JCM 9403 / PLM1-5), this protein is Small ribosomal subunit protein uS3.